A 469-amino-acid chain; its full sequence is GTPase Der (469 aa).

EngA-type G domains follow at residues P3–E166 and L177–N350. Residues G9–S16, D56–I60, N118–D121, G183–S190, D230–V234, and N295–D298 contribute to the GTP site. The KH-like domain maps to L351 to E435.

It belongs to the TRAFAC class TrmE-Era-EngA-EngB-Septin-like GTPase superfamily. EngA (Der) GTPase family. Associates with the 50S ribosomal subunit.

Its function is as follows. GTPase that plays an essential role in the late steps of ribosome biogenesis. This is GTPase Der from Acinetobacter baumannii (strain AB0057).